Here is a 252-residue protein sequence, read N- to C-terminus: NAD-dependent protein deacetylase (252 aa).

In terms of domain architecture, Deacetylase sirtuin-type spans 2 to 243; sequence DSKRDEKILE…DRVVKELKKI (242 aa). NAD(+)-binding residues include Ala-28, Thr-32, Phe-39, Arg-40, Gln-109, Ile-111, Asp-112, and His-127. Phe-39 lines the nicotinamide pocket. Nicotinamide contacts are provided by Ile-111 and Asp-112. Catalysis depends on His-127, which acts as the Proton acceptor. Residues Cys-135, Cys-138, Cys-148, and Cys-150 each contribute to the Zn(2+) site. Residues Thr-188, Ser-189, and Asn-211 each contribute to the NAD(+) site.

Belongs to the sirtuin family. Class U subfamily. It depends on Zn(2+) as a cofactor.

The protein resides in the cytoplasm. The catalysed reaction is N(6)-acetyl-L-lysyl-[protein] + NAD(+) + H2O = 2''-O-acetyl-ADP-D-ribose + nicotinamide + L-lysyl-[protein]. Its function is as follows. NAD-dependent protein deacetylase which modulates the activities of several enzymes which are inactive in their acetylated form. This is NAD-dependent protein deacetylase from Fusobacterium nucleatum subsp. nucleatum (strain ATCC 25586 / DSM 15643 / BCRC 10681 / CIP 101130 / JCM 8532 / KCTC 2640 / LMG 13131 / VPI 4355).